The sequence spans 389 residues: Succinate--CoA ligase [ADP-forming] subunit beta (389 aa).

Positions 9–236 (RDMFEAHGVP…KDAADPLEAK (228 aa)) constitute an ATP-grasp domain. ATP contacts are provided by residues K45, 52-54 (GRG), A94, and E99. Mg(2+) contacts are provided by N191 and D205. Substrate-binding positions include N256 and 318–320 (GIT).

It belongs to the succinate/malate CoA ligase beta subunit family. As to quaternary structure, heterotetramer of two alpha and two beta subunits. Mg(2+) is required as a cofactor.

The enzyme catalyses succinate + ATP + CoA = succinyl-CoA + ADP + phosphate. It catalyses the reaction GTP + succinate + CoA = succinyl-CoA + GDP + phosphate. The protein operates within carbohydrate metabolism; tricarboxylic acid cycle; succinate from succinyl-CoA (ligase route): step 1/1. Functionally, succinyl-CoA synthetase functions in the citric acid cycle (TCA), coupling the hydrolysis of succinyl-CoA to the synthesis of either ATP or GTP and thus represents the only step of substrate-level phosphorylation in the TCA. The beta subunit provides nucleotide specificity of the enzyme and binds the substrate succinate, while the binding sites for coenzyme A and phosphate are found in the alpha subunit. The sequence is that of Succinate--CoA ligase [ADP-forming] subunit beta from Paenarthrobacter aurescens (strain TC1).